Consider the following 244-residue polypeptide: MANHETIFDQLKKQIPVDEEEPLILNRDSSVGLVIVDVVNGFCTIGSGNMAPTKHNEQISKMVEESAKLAREFCDRKWPVLAFIDSHHPDIPERPYPPHCIIGTEESELVPALKWLESEDCATLRRKDCINGFVGSMESDGSNVFVDWVKEKQIKVIVVVGICTDICVFDFVATALSARNHGVLSPVEDVVVYSRGCATFDLPLHVAKDIKGAQAHPQELMHHVGLYMAKGRGAQVVSKISFET.

The protein belongs to the isochorismatase family. In terms of tissue distribution, expressed in roots and stems, and at lower levels in flowers, siliques and leaves.

It catalyses the reaction nicotinamide + H2O = nicotinate + NH4(+). The protein operates within cofactor biosynthesis; nicotinate biosynthesis; nicotinate from nicotinamide: step 1/1. Its function is as follows. Catalyzes the deamidation of nicotinamide, an early step in the NAD(+) salvage pathway. Prevents the accumulation of intracellular nicotinamide, a known inhibitor of poly(ADP-ribose) polymerases (PARP enzymes). The polypeptide is Nicotinamidase 1 (Arabidopsis thaliana (Mouse-ear cress)).